The primary structure comprises 253 residues: MKQYIVLACMCLAAAAMPASLQQSSSSCTEEENKHYMGIDVIIKVTKQDQTPTNDKICQSVTEITESESDPEVESEDDSTSVEDVDPPTTYYSIIGGGLRMNFGFTKCPQIKSISESANGNAVNARLSSVPLGQGKDSPAITRAEALAMIKDCELSIDIRCSEEEKDSDIQTHPVLESNISHKKVSYEDIIGSTIVDTKCVKNLEFSVRIGDMCKESSDLEVKDGFKYVDGSVSEGVTDDTSLIDSTKLKSCV.

The signal sequence occupies residues 1 to 17; that stretch reads MKQYIVLACMCLAAAAM. The disordered stretch occupies residues 62-87; it reads TEITESESDPEVESEDDSTSVEDVDP. Residues 65–86 show a composition bias toward acidic residues; that stretch reads TESESDPEVESEDDSTSVEDVD.

Belongs to the orthopoxvirus OPG001 family. In terms of assembly, binds to host CC chemokines, such as RANTES/CCL5, MIP-1alpha/CCL3, MCP-1/CCL2 and eotaxin.

It is found in the secreted. Its function is as follows. Inhibits host immune defense by binding to host chemokines. Binds host CC chemokines (beta chemokines) such as RANTES with high affinity, but not CXC or C chemokines (alpha and gamma chemokines). The chain is Chemokine-binding protein (OPG001) from Variola virus (isolate Human/India/Ind3/1967) (VARV).